The primary structure comprises 125 residues: Lymphocyte antigen 6 complex locus protein G6c (125 aa).

A signal peptide spans 1-18 (MRALLLLSLSALLCWVSA). Positions 20–111 (IRCHSCYKLP…PRPTPALTLV (92 aa)) constitute a UPAR/Ly6 domain. 3 disulfides stabilise this stretch: cysteine 22–cysteine 47, cysteine 25–cysteine 33, and cysteine 39–cysteine 65. Asparagine 88 is a glycosylation site (N-linked (GlcNAc...) asparagine). Cysteine 92 and cysteine 97 form a disulfide bridge. Residue serine 99 is the site of GPI-anchor amidated serine attachment. Residues 100 to 125 (PAPRPTPALTLVFLTSLAGLGLWLLH) constitute a propeptide, removed in mature form.

N-glycosylated.

It localises to the cell membrane. This Bos taurus (Bovine) protein is Lymphocyte antigen 6 complex locus protein G6c (LY6G6C).